Reading from the N-terminus, the 1711-residue chain is Hybrid PKS-NRPS synthetase TAS1 (1711 aa).

A condensation (C) domain region spans residues 43 to 397; that stretch reads APLSKMQRAL…RNGLNSEHRV (355 aa). The adenylation (A) domain stretch occupies residues 506–907; it reads QQQATLRPEQ…TVLLYGRINN (402 aa). One can recognise a Carrier 1 domain in the interval 1043–1119; sequence LEWAAAKARI…SQVGLVQSRR (77 aa). An O-(pantetheine 4'-phosphoryl)serine modification is found at Ser-1079. The segment covering 1114–1127 has biased composition (polar residues); sequence LVQSRRGSSGSPRT. The segment at 1114-1159 is disordered; it reads LVQSRRGSSGSPRTVRSHARPQRKAKTPPRQARPETPESDYDQLPD. Basic residues predominate over residues 1128 to 1140; the sequence is VRSHARPQRKAKT. Residues 1159–1236 enclose the Carrier 2 domain; the sequence is DLRDDVQQSI…AQVELLGRFT (78 aa). Ser-1195 carries the post-translational modification O-(pantetheine 4'-phosphoryl)serine. The 418-residue stretch at 1266–1683 folds into the Ketosynthase family 3 (KS3) domain; the sequence is REQYAIVGMS…GSTAHVVLSA (418 aa). Active-site for beta-ketoacyl synthase activity residues include Cys-1429, His-1565, and Asn-1608.

This sequence in the N-terminal section; belongs to the NRP synthetase family. The cofactor is pantetheine 4'-phosphate.

The catalysed reaction is acetoacetyl-CoA + L-isoleucine + ATP = tenuazonic acid + AMP + diphosphate + CoA + 2 H(+). In terms of biological role, hybrid PKS-NRPS synthetase that mediates the biosynthesis of the toxin tenuazonic acid (TeA), an inhibitor of protein biosynthesis on ribosomes by suppressing the release of new protein. TAS1 alone is sufficient for TeA synthesis via the condensation of isoleucine (Ile) with acetoacetyl-CoA by the N-terminal NRPS module and subsequent cyclization conducted by the C-terminal KS domain. The chain is Hybrid PKS-NRPS synthetase TAS1 from Botryobasidium botryosum (strain FD-172 SS1).